Consider the following 488-residue polypeptide: ATP synthase subunit beta (488 aa).

164–171 contacts ATP; the sequence is GGAGMGKT.

Belongs to the ATPase alpha/beta chains family. As to quaternary structure, F-type ATPases have 2 components, CF(1) - the catalytic core - and CF(0) - the membrane proton channel. CF(1) has five subunits: alpha(3), beta(3), gamma(1), delta(1), epsilon(1). CF(0) has four main subunits: a(1), b(1), b'(1) and c(9-12).

It localises to the cellular thylakoid membrane. It catalyses the reaction ATP + H2O + 4 H(+)(in) = ADP + phosphate + 5 H(+)(out). Its function is as follows. Produces ATP from ADP in the presence of a proton gradient across the membrane. The catalytic sites are hosted primarily by the beta subunits. The chain is ATP synthase subunit beta from Synechococcus sp. (strain RCC307).